A 43-amino-acid chain; its full sequence is Metallothionein A (43 aa).

The interval 1–16 (SCAGSCKCKNCRCRSC) is beta. C2, C6, C8, C11, C13, C16, C20, C21, C23, C24, C28, C31, C35, and C37 together coordinate a divalent metal cation. The segment at 17-43 (RKSCCSCCPAGCNNCAKGCVCKEPASS) is alpha.

The protein belongs to the metallothionein superfamily. Type 1 family.

Metallothioneins have a high content of cysteine residues that bind various heavy metals. This chain is Metallothionein A, found in Colinus virginianus (Northern bobwhite).